Here is a 131-residue protein sequence, read N- to C-terminus: Small ribosomal subunit protein uS11 (131 aa).

The protein belongs to the universal ribosomal protein uS11 family. Part of the 30S ribosomal subunit. Interacts with proteins S7 and S18. Binds to IF-3.

Its function is as follows. Located on the platform of the 30S subunit, it bridges several disparate RNA helices of the 16S rRNA. Forms part of the Shine-Dalgarno cleft in the 70S ribosome. The polypeptide is Small ribosomal subunit protein uS11 (Deinococcus radiodurans (strain ATCC 13939 / DSM 20539 / JCM 16871 / CCUG 27074 / LMG 4051 / NBRC 15346 / NCIMB 9279 / VKM B-1422 / R1)).